Here is a 168-residue protein sequence, read N- to C-terminus: Large ribosomal subunit protein uL5 (168 aa).

The protein belongs to the universal ribosomal protein uL5 family. As to quaternary structure, part of the 50S ribosomal subunit; contacts the 5S rRNA and probably tRNA. Forms a bridge to the 30S subunit in the 70S ribosome.

Functionally, this is one of the proteins that bind and probably mediate the attachment of the 5S RNA into the large ribosomal subunit, where it forms part of the central protuberance. In the 70S ribosome it contacts protein S13 of the 30S subunit (bridge B1b), connecting the 2 subunits; this bridge is implicated in subunit movement. May contact the P site tRNA; the 5S rRNA and some of its associated proteins might help stabilize positioning of ribosome-bound tRNAs. The protein is Large ribosomal subunit protein uL5 of Methanospirillum hungatei JF-1 (strain ATCC 27890 / DSM 864 / NBRC 100397 / JF-1).